Here is a 494-residue protein sequence, read N- to C-terminus: Cobyric acid synthase (494 aa).

The GATase cobBQ-type domain maps to 254-453; that stretch reads KQTVAVIAYP…LHGLFEDPGA (200 aa). Catalysis depends on cysteine 338, which acts as the Nucleophile. Histidine 445 is a catalytic residue.

The protein belongs to the CobB/CobQ family. CobQ subfamily.

The protein operates within cofactor biosynthesis; adenosylcobalamin biosynthesis. Catalyzes amidations at positions B, D, E, and G on adenosylcobyrinic A,C-diamide. NH(2) groups are provided by glutamine, and one molecule of ATP is hydrogenolyzed for each amidation. The sequence is that of Cobyric acid synthase from Albidiferax ferrireducens (strain ATCC BAA-621 / DSM 15236 / T118) (Rhodoferax ferrireducens).